We begin with the raw amino-acid sequence, 569 residues long: Paxillin-B (569 aa).

Residues Asp10–Leu18 carry the LD motif 1 motif. Residues Gln62–Asn78 are compositionally biased toward polar residues. The interval Gln62 to Ile103 is disordered. A compositionally biased stretch (low complexity) spans Thr79–Gln102. Residues Leu106 to Leu112 carry the LD motif 2 motif. The tract at residues Thr129 to Leu311 is disordered. Positions Asn150–Ser161 are enriched in low complexity. Polar residues-rich tracts occupy residues Arg162–Lys188 and Thr196–Tyr206. Residues Ser207–Pro217 are compositionally biased toward low complexity. The short motif at Leu232–Leu239 is the LD motif 3 element. The segment covering His258–Pro272 has biased composition (basic residues). Low complexity predominate over residues Asn273–Asn301. An LD motif 4 motif is present at residues Leu311–Leu318. 4 consecutive LIM zinc-binding domains span residues Gly334–Phe391, Ala393–Val452, Arg453–Gly510, and Ser511–Ala569.

Belongs to the paxillin family. In terms of tissue distribution, expressed in the upper and lower cup of the fruiting body.

Its subcellular location is the cytoplasm. The protein resides in the cell cortex. The protein localises to the cell projection. It localises to the filopodium. It is found in the cell junction. Its subcellular location is the focal adhesion. The protein resides in the cytoskeleton. Its function is as follows. Required for cell-substrate adhesion, cell sorting, slug migration, and cell differentiation. May function upstream of limB. This Dictyostelium discoideum (Social amoeba) protein is Paxillin-B (paxB).